Here is a 544-residue protein sequence, read N- to C-terminus: CRISPR-associated endodeoxyribonuclease Cas12f2 (544 aa).

A recognition domain (REC) region spans residues 1-195; that stretch reads MNMSKTTISV…KPNERETRYV (195 aa). The tract at residues 196–326 is wedge domain (WED); it reads HISKLESPSK…YLQYTYEAEV (131 aa). The linker stretch occupies residues 327-334; it reads EANKEYAG. Positions 335–485 are ruvC-I; that stretch reads CLGVDIGCSK…VYVKPDYTSQ (151 aa). Residues D339 and E430 contribute to the active site. Positions 486-520 are target nucleic acid-binding (TNB); sequence TCSSCGADKEKTERPSQAIFRCLNPTCRYYQRDIN. Residues C487, C490, C507, and C512 each coordinate Zn(2+). Residues 521-541 are ruvC-II; sequence ADFNAAVNIAKKALNNTEVVT. Residue D522 is part of the active site.

The protein belongs to the CRISPR-associated endonuclease Cas12f family. An asymmetric homodimer. Guide RNA is probably required for dimerization. Mg(2+) serves as cofactor. The cofactor is Zn(2+).

Its function is as follows. CRISPR (clustered regularly interspaced short palindromic repeat), is an adaptive immune system that provides protection against mobile genetic elements (viruses, transposable elements and conjugative plasmids). CRISPR clusters contain sequences complementary to antecedent mobile elements and target invading nucleic acids. CRISPR clusters are transcribed and processed into CRISPR RNA (crRNA), which requires a trans-encoded small RNA (tracrRNA), but not this protein (in vitro). Recognizes a short motif in the CRISPR repeat sequences (the 5' PAM or protospacer adjacent motif, TTAT in this organism) to help distinguish self versus nonself, as targets within the CRISPR locus do not have PAMs. Upon expression in E.coli of this protein, a mini CRISPR array and the probable tracrRNA, has dsDNA endonuclease activity. DNA cleavage is centered around positions 21 base pairs 3' of PAM. The mini system does not protect E.coli against transformation by foreign plasmids. In Micrarchaeota archaeon (strain CG1_02_47_40), this protein is CRISPR-associated endodeoxyribonuclease Cas12f2.